Reading from the N-terminus, the 148-residue chain is D-aminoacyl-tRNA deacylase (148 aa).

Positions 137–138 (GP) match the Gly-cisPro motif, important for rejection of L-amino acids motif.

It belongs to the DTD family. In terms of assembly, homodimer.

The protein localises to the cytoplasm. It carries out the reaction glycyl-tRNA(Ala) + H2O = tRNA(Ala) + glycine + H(+). The catalysed reaction is a D-aminoacyl-tRNA + H2O = a tRNA + a D-alpha-amino acid + H(+). In terms of biological role, an aminoacyl-tRNA editing enzyme that deacylates mischarged D-aminoacyl-tRNAs. Also deacylates mischarged glycyl-tRNA(Ala), protecting cells against glycine mischarging by AlaRS. Acts via tRNA-based rather than protein-based catalysis; rejects L-amino acids rather than detecting D-amino acids in the active site. By recycling D-aminoacyl-tRNA to D-amino acids and free tRNA molecules, this enzyme counteracts the toxicity associated with the formation of D-aminoacyl-tRNA entities in vivo and helps enforce protein L-homochirality. The polypeptide is D-aminoacyl-tRNA deacylase (Enterococcus faecalis (strain ATCC 700802 / V583)).